We begin with the raw amino-acid sequence, 570 residues long: Molecular chaperone MKKS (570 aa).

ATP is bound at residue 192-199 (GHIILGKS). The segment at 198–370 (KSLIVPLKGQ…FHLIPNEATI (173 aa)) is substrate-binding apical domain.

This sequence belongs to the TCP-1 chaperonin family. As to quaternary structure, component of a complex composed at least of MKKS, BBS10, BBS12, TCP1, CCT2, CCT3, CCT4, CCT5 and CCT8. Interacts with STUB1. Interacts with BBS2 (via coiled coil domain). Interacts with CCDC28B. Interacts with BBS12. Interacts with SMARCC1, a component of the SWI/SNF complexes; the interaction takes place predominantly in the cytoplasm and may modulate SMARCC1 location. Interacts with DLEC1.

It is found in the cytoplasm. It localises to the cytoskeleton. The protein localises to the microtubule organizing center. Its subcellular location is the centrosome. The protein resides in the cytosol. It is found in the nucleus. Its function is as follows. Probable molecular chaperone that assists the folding of proteins upon ATP hydrolysis. Plays a role in the assembly of BBSome, a complex involved in ciliogenesis regulating transports vesicles to the cilia. May play a role in protein processing in limb, cardiac and reproductive system development. May play a role in cytokinesis. This Pongo abelii (Sumatran orangutan) protein is Molecular chaperone MKKS (MKKS).